Consider the following 233-residue polypeptide: Ribitol-5-phosphate cytidylyltransferase (233 aa).

CTP is bound by residues 7 to 10 and 80 to 86; these read LAGG and GADRNET.

The protein belongs to the IspD/TarI cytidylyltransferase family. TarI subfamily.

The catalysed reaction is D-ribitol 5-phosphate + CTP + H(+) = CDP-L-ribitol + diphosphate. Its pathway is cell wall biogenesis; poly(ribitol phosphate) teichoic acid biosynthesis. Its function is as follows. Catalyzes the transfer of the cytidylyl group of CTP to D-ribitol 5-phosphate. The chain is Ribitol-5-phosphate cytidylyltransferase from Lactiplantibacillus plantarum (strain ATCC BAA-793 / NCIMB 8826 / WCFS1) (Lactobacillus plantarum).